The sequence spans 641 residues: Calpain-6 (641 aa).

In terms of domain architecture, Calpain catalytic spans 26–343 (LFCDPTFLPE…FHKLNVCRNV (318 aa)). The domain III stretch occupies residues 344 to 495 (NNPVFGRKEL…IFSEVPVQLR (152 aa)). A C2 domain is found at 498 to 621 (TLDMPKMSCW…YLRKKGGPTA (124 aa)).

The protein belongs to the peptidase C2 family. In terms of assembly, interacts (via domain III) with microtubules. Interacts (via domain II) with ARHGEF2 (via the N-terminal zinc finger).

It is found in the cytoplasm. Its subcellular location is the perinuclear region. The protein localises to the cytoskeleton. The protein resides in the spindle. Its function is as follows. Microtubule-stabilizing protein that may be involved in the regulation of microtubule dynamics and cytoskeletal organization. May act as a regulator of RAC1 activity through interaction with ARHGEF2 to control lamellipodial formation and cell mobility. Does not seem to have protease activity as it has lost the active site residues. The sequence is that of Calpain-6 (Capn6) from Mus musculus (Mouse).